The primary structure comprises 234 residues: Large ribosomal subunit protein uL1 (234 aa).

This sequence belongs to the universal ribosomal protein uL1 family. As to quaternary structure, part of the 50S ribosomal subunit.

Functionally, binds directly to 23S rRNA. The L1 stalk is quite mobile in the ribosome, and is involved in E site tRNA release. Protein L1 is also a translational repressor protein, it controls the translation of the L11 operon by binding to its mRNA. This Bartonella tribocorum (strain CIP 105476 / IBS 506) protein is Large ribosomal subunit protein uL1.